Reading from the N-terminus, the 1023-residue chain is 2-oxoglutarate dehydrogenase complex component E1 (1023 aa).

A mitochondrion-targeting transit peptide spans M1–Y40. K74 bears the N6-succinyllysine mark. At S100 the chain carries Phosphoserine. Ca(2+) contacts are provided by H143, D156, and D158. A thiamine diphosphate-binding site is contributed by R312. Position 401 is an N6-acetyllysine (K401). Thiamine diphosphate contacts are provided by D411, N444, and I446. Residues D411, N444, and I446 each coordinate Mg(2+). K534 is covalently cross-linked (Glycyl lysine isopeptide (Lys-Gly) (interchain with G-Cter in ubiquitin)). K564 is subject to N6-succinyllysine. Position 676 (Q676) interacts with thiamine diphosphate. K970 carries the post-translational modification N6-acetyllysine.

Belongs to the alpha-ketoglutarate dehydrogenase family. Homodimer. The 2-oxoglutarate dehydrogenase complex is composed of OGDH (2-oxoglutarate dehydrogenase; E1), DLST (dihydrolipoamide succinyltransferase; E2), DLD (dihydrolipoamide dehydrogenase; E3) and the assembly factor KGD4. It contains multiple copies of the three enzymatic components (E1, E2 and E3). In the nucleus, the 2-oxoglutarate dehydrogenase complex associates with KAT2A. Interacts with ABHD11; this interaction maintains the functional lipoylation of the 2-oxoglutarate dehydrogenase complex. Thiamine diphosphate is required as a cofactor. Mg(2+) serves as cofactor.

The protein resides in the mitochondrion. It localises to the nucleus. The catalysed reaction is N(6)-[(R)-lipoyl]-L-lysyl-[protein] + 2-oxoglutarate + H(+) = N(6)-[(R)-S(8)-succinyldihydrolipoyl]-L-lysyl-[protein] + CO2. With respect to regulation, calcium ions and ADP stimulate, whereas ATP and NADH reduce catalytic activity. Functionally, 2-oxoglutarate dehydrogenase (E1o) component of the 2-oxoglutarate dehydrogenase complex (OGDHC). Participates in the first step, rate limiting for the overall conversion of 2-oxoglutarate to succinyl-CoA and CO(2) catalyzed by the whole OGDHC. Catalyzes the irreversible decarboxylation of 2-oxoglutarate (alpha-ketoglutarate) via the thiamine diphosphate (ThDP) cofactor and subsequent transfer of the decarboxylated acyl intermediate on an oxidized dihydrolipoyl group that is covalently amidated to the E2 enzyme (dihydrolipoyllysine-residue succinyltransferase or DLST). Plays a key role in the Krebs (citric acid) cycle, which is a common pathway for oxidation of fuel molecules, including carbohydrates, fatty acids, and amino acids. Can catalyze the decarboxylation of 2-oxoadipate in vitro, but at a much lower rate than 2-oxoglutarate. Mainly active in the mitochondrion. A fraction of the 2-oxoglutarate dehydrogenase complex also localizes in the nucleus and is required for lysine succinylation of histones: associates with KAT2A on chromatin and provides succinyl-CoA to histone succinyltransferase KAT2A. The polypeptide is 2-oxoglutarate dehydrogenase complex component E1 (Pongo abelii (Sumatran orangutan)).